The chain runs to 157 residues: Transcription elongation factor GreA (157 aa).

Positions 9–30 form a coiled coil; the sequence is LEGAQQLKEELKRRKTTDRKRI.

It belongs to the GreA/GreB family.

Its function is as follows. Necessary for efficient RNA polymerase transcription elongation past template-encoded arresting sites. The arresting sites in DNA have the property of trapping a certain fraction of elongating RNA polymerases that pass through, resulting in locked ternary complexes. Cleavage of the nascent transcript by cleavage factors such as GreA or GreB allows the resumption of elongation from the new 3'terminus. GreA releases sequences of 2 to 3 nucleotides. The protein is Transcription elongation factor GreA of Magnetococcus marinus (strain ATCC BAA-1437 / JCM 17883 / MC-1).